The sequence spans 122 residues: Large ribosomal subunit protein uL14c (122 aa).

The protein belongs to the universal ribosomal protein uL14 family. As to quaternary structure, part of the 50S ribosomal subunit.

It is found in the plastid. The protein resides in the chloroplast. Binds to 23S rRNA. This chain is Large ribosomal subunit protein uL14c, found in Oltmannsiellopsis viridis (Marine flagellate).